A 325-amino-acid polypeptide reads, in one-letter code: Glutarate 2-hydroxylase (325 aa).

The Fe cation site is built by His-160, Asp-162, and His-292.

The protein belongs to the glutarate hydroxylase family. In terms of assembly, homotetramer. It depends on Fe(2+) as a cofactor.

The enzyme catalyses glutarate + 2-oxoglutarate + O2 = (S)-2-hydroxyglutarate + succinate + CO2. It participates in amino-acid degradation. Acts as an alpha-ketoglutarate-dependent dioxygenase catalyzing hydroxylation of glutarate (GA) to L-2-hydroxyglutarate (L2HG). Functions in a L-lysine degradation pathway that proceeds via cadaverine, glutarate and L-2-hydroxyglutarate. This chain is Glutarate 2-hydroxylase, found in Escherichia coli O17:K52:H18 (strain UMN026 / ExPEC).